The primary structure comprises 782 residues: E3 UFM1-protein ligase 1 homolog (782 aa).

The interval 404–478 is disordered; the sequence is NVSTQELEDE…SRGGGGASKK (75 aa).

This sequence belongs to the UFL1 family.

Functionally, E3 UFM1-protein ligase that mediates ufmylation of target proteins. The protein is E3 UFM1-protein ligase 1 homolog of Drosophila melanogaster (Fruit fly).